The following is an 811-amino-acid chain: MTTFCRVLLIFGIYVAVSCAQSVEDDVFHFTNPSQGNAVWILDESSLPWTGGYQFLRSISGMPTTLLSIVDSSTGVTLGQCVAPQDATGNFSKRWEKFSWELTASGLDCQFEQGAATRVEFDRSQNPRTFSIRIQSITGPACLRDVVVQTEQATGCPPHLSRNSFTANALNCSCPYLDAANEDGETENEDVDMLANSPQFPLFKVVDPSVLGSANPPTLPPSPCANHECHNNGTCLVSQEGAAMCLCRNGFTGDRCELDVCSAVPCQNGGVCRSNNGIAYCECPPAFSGLLCESAHTDESAAPICNPECSNGQCVLKDGQPQCECRQGFTGANCNVLDVCLGDAACSMFGPSAKCVLDDNMDKMSSASLINGTYDCLCPHPIHGQFVDCMQLHAPSATSVQPSEPAVVINNVTPSFPVLEISQVPTGAPKTFTATSTTSVATQPAVPVVQTLPTTQQVPSEPFVGFTVTREPLRPFEATTTTTLPPPFQQHIITAGEQPTWSSQQPQQPSEVPVPAQTMTTFIFPQTPETTTFPPTTGATVHKFVSPNMPDENEEEEEDETTDETEETFPTPSTMQVATDSSIRSEFFTSTFPTTTDMEETDEEEDMTEEVTDSSTQPSTTVFIQPSSTTFTTEAPTTTMEEEETTEQEEIESEEAISTTTQTSLPFWMTTIAIKMPDIVASPTPMIIMPHPQPEEKMETSTEGIESEEERTTESNEEIIPKNMEPTTPSDITHHHTSSGKQSSAVASWIIATIALIVLGSLLLATSLFVLRYIRQSRKLHGKYNPAREEHNLSAAYAMPMSHIAKEERLI.

A signal peptide spans 1–20 (MTTFCRVLLIFGIYVAVSCA). Over 21 to 749 (QSVEDDVFHF…GKQSSAVASW (729 aa)) the chain is Extracellular. 3 N-linked (GlcNAc...) asparagine glycosylation sites follow: Asn90, Asn171, and Asn232. EGF-like domains follow at residues 220-257 (PPSPCANHECHNNGTCLVSQEGAAMCLCRNGFTGDRCE), 258-293 (LDVCSAVPCQNGGVCRSNNGIAYCECPPAFSGLLCE), and 301-335 (AAPICNPECSNGQCVLKDGQPQCECRQGFTGANCN). Cystine bridges form between Cys224/Cys235, Cys229/Cys245, Cys247/Cys256, Cys261/Cys272, Cys266/Cys281, Cys283/Cys292, Cys305/Cys314, Cys309/Cys323, and Cys325/Cys334. Asn371 carries N-linked (GlcNAc...) asparagine glycosylation. Disordered regions lie at residues 544–579 (FVSPNMPDENEEEEEDETTDETEETFPTPSTMQVAT), 592–659 (FPTT…AIST), and 690–739 (PHPQ…HTSS). Acidic residues predominate over residues 551–567 (DENEEEEEDETTDETEE). Polar residues predominate over residues 570-579 (PTPSTMQVAT). Residues 597–612 (DMEETDEEEDMTEEVT) are compositionally biased toward acidic residues. The span at 626 to 639 (PSSTTFTTEAPTTT) shows a compositional bias: low complexity. Composition is skewed to acidic residues over residues 640 to 655 (MEEEETTEQEEIESEE) and 705 to 717 (IESEEERTTESNE). Residues 750–770 (IIATIALIVLGSLLLATSLFV) traverse the membrane as a helical segment. Residues 771–811 (LRYIRQSRKLHGKYNPAREEHNLSAAYAMPMSHIAKEERLI) are Cytoplasmic-facing.

The protein localises to the membrane. Its function is as follows. Regulates pharyngeal pumping during feeding. This is Abnormal pharyngeal pumping eat-20 (eat-20) from Caenorhabditis briggsae.